Consider the following 504-residue polypeptide: UDP-N-acetylmuramoylalanine--D-glutamate ligase (504 aa).

129-135 is a binding site for ATP; that stretch reads GTNGKTT.

The protein belongs to the MurCDEF family.

The protein resides in the cytoplasm. It carries out the reaction UDP-N-acetyl-alpha-D-muramoyl-L-alanine + D-glutamate + ATP = UDP-N-acetyl-alpha-D-muramoyl-L-alanyl-D-glutamate + ADP + phosphate + H(+). It functions in the pathway cell wall biogenesis; peptidoglycan biosynthesis. Its function is as follows. Cell wall formation. Catalyzes the addition of glutamate to the nucleotide precursor UDP-N-acetylmuramoyl-L-alanine (UMA). This chain is UDP-N-acetylmuramoylalanine--D-glutamate ligase, found in Burkholderia thailandensis (strain ATCC 700388 / DSM 13276 / CCUG 48851 / CIP 106301 / E264).